The primary structure comprises 726 residues: Catalase-peroxidase (726 aa).

The tryptophyl-tyrosyl-methioninium (Trp-Tyr) (with M-252) cross-link spans 98 to 226 (WHSAGTYRMQ…LAAVHMGLIY (129 aa)). His-99 acts as the Proton acceptor in catalysis. A cross-link (tryptophyl-tyrosyl-methioninium (Tyr-Met) (with W-98)) is located at residues 226 to 252 (YVNPEGVNGQPDPARTAQHVRETFARM). His-267 contributes to the heme b binding site.

Belongs to the peroxidase family. Peroxidase/catalase subfamily. In terms of assembly, homodimer or homotetramer. Requires heme b as cofactor. Formation of the three residue Trp-Tyr-Met cross-link is important for the catalase, but not the peroxidase activity of the enzyme.

It catalyses the reaction H2O2 + AH2 = A + 2 H2O. It carries out the reaction 2 H2O2 = O2 + 2 H2O. Bifunctional enzyme with both catalase and broad-spectrum peroxidase activity. The chain is Catalase-peroxidase from Roseobacter denitrificans (strain ATCC 33942 / OCh 114) (Erythrobacter sp. (strain OCh 114)).